The following is a 299-amino-acid chain: Elongation factor Ts, mitochondrial (299 aa).

Residues 1-18 (MLFQRRLHFHQFFGKTRV) constitute a mitochondrion transit peptide.

Belongs to the EF-Ts family.

It is found in the mitochondrion. Associates with the EF-Tu.GDP complex and induces the exchange of GDP to GTP. It remains bound to the aminoacyl-tRNA.EF-Tu.GTP complex up to the GTP hydrolysis stage on the ribosome. The chain is Elongation factor Ts, mitochondrial (tsf1) from Schizosaccharomyces pombe (strain 972 / ATCC 24843) (Fission yeast).